We begin with the raw amino-acid sequence, 327 residues long: Serpentine receptor class alpha-12 (327 aa).

Residues 1–18 (MGCASEIQAEIFTSFGQL) are Extracellular-facing. The helical transmembrane segment at 19–39 (FYASFQTILFLATIIGSLLAI) threads the bilayer. Residues 40–53 (FELCKKTTVPDSTR) lie on the Cytoplasmic side of the membrane. Residues 54–74 (VLLIGSLFFANAHEFAYFTAP) traverse the membrane as a helical segment. Residues 75–98 (LKVFQLNIFNTNTSCYPLISTRDC) lie on the Extracellular side of the membrane. The chain crosses the membrane as a helical span at residues 99-119 (IPTTTVLAMGISGNMLIQSAL). The Cytoplasmic segment spans residues 120–138 (SIDRLLATIFPFSYSRMRA). The helical transmembrane segment at 139-159 (LPGFVLLIMVLIPAMFTYSWI) threads the bilayer. At 160–185 (RLDIVLDDYQMFCSQWSANISTRANT) the chain is on the extracellular side. The chain crosses the membrane as a helical span at residues 186–206 (FLEICSYLTVAHIIINCLIIL). Over 207-234 (RNRAIEKRCRFDVTQRYLTSENLKTTQA) the chain is Cytoplasmic. A helical transmembrane segment spans residues 235–255 (ICYLSIAQFLAMFMYSGGVLL). Over 256 to 270 (MRKNRENIPTLIYFN) the chain is Extracellular. The helical transmembrane segment at 271 to 291 (VIVWVYAPPYACVSLAPLILF) threads the bilayer. The Cytoplasmic portion of the chain corresponds to 292 to 327 (SLWNLKKQRHIQIKSVQSAQKETQDDYIRKLQKSWK).

The protein belongs to the nematode receptor-like protein sra family. As to expression, expressed in neurons RIF/RIG and PVT.

It is found in the membrane. The sequence is that of Serpentine receptor class alpha-12 (sra-12) from Caenorhabditis elegans.